The primary structure comprises 546 residues: CTP synthase (546 aa).

Residues 1–269 (MRSKKTKFIF…DERLAEVLNI (269 aa)) form an amidoligase domain region. Serine 17 is a binding site for CTP. Serine 17 provides a ligand contact to UTP. Residues 18 to 23 (SLGKGL) and aspartate 75 each bind ATP. Residues aspartate 75 and glutamate 143 each coordinate Mg(2+). CTP is bound by residues 150–152 (DIE), 190–195 (KTKPTQ), and lysine 226. UTP is bound by residues 190–195 (KTKPTQ) and lysine 226. Residues 295–537 (RIAIVGKYVN…IRAALAQRDA (243 aa)) form the Glutamine amidotransferase type-1 domain. L-glutamine is bound at residue glycine 357. Cysteine 384 acts as the Nucleophile; for glutamine hydrolysis in catalysis. L-glutamine is bound by residues 385–388 (LGLQ), glutamate 408, and arginine 465. Catalysis depends on residues histidine 510 and glutamate 512.

It belongs to the CTP synthase family. In terms of assembly, homotetramer.

It catalyses the reaction UTP + L-glutamine + ATP + H2O = CTP + L-glutamate + ADP + phosphate + 2 H(+). The enzyme catalyses L-glutamine + H2O = L-glutamate + NH4(+). It carries out the reaction UTP + NH4(+) + ATP = CTP + ADP + phosphate + 2 H(+). The protein operates within pyrimidine metabolism; CTP biosynthesis via de novo pathway; CTP from UDP: step 2/2. Allosterically activated by GTP, when glutamine is the substrate; GTP has no effect on the reaction when ammonia is the substrate. The allosteric effector GTP functions by stabilizing the protein conformation that binds the tetrahedral intermediate(s) formed during glutamine hydrolysis. Inhibited by the product CTP, via allosteric rather than competitive inhibition. In terms of biological role, catalyzes the ATP-dependent amination of UTP to CTP with either L-glutamine or ammonia as the source of nitrogen. Regulates intracellular CTP levels through interactions with the four ribonucleotide triphosphates. The chain is CTP synthase from Myxococcus xanthus (strain DK1622).